Here is a 290-residue protein sequence, read N- to C-terminus: Nucleotide-binding protein LAR_0375 (290 aa).

An ATP-binding site is contributed by 13 to 20 (GMSGAGKT). 63–66 (DMRS) serves as a coordination point for GTP.

It belongs to the RapZ-like family.

Its function is as follows. Displays ATPase and GTPase activities. The polypeptide is Nucleotide-binding protein LAR_0375 (Limosilactobacillus reuteri subsp. reuteri (strain JCM 1112) (Lactobacillus reuteri)).